The following is a 258-amino-acid chain: Thrombin-like enzyme ancrod-2 (258 aa).

A signal peptide spans 1-18; sequence MVLIRVLANLVILQLSYA. Positions 19–24 are excised as a propeptide; sequence QKSSEL. One can recognise a Peptidase S1 domain in the interval 25–251; it reads VIGGDECNIN…HLHWILSIMA (227 aa). Cystine bridges form between Cys-31–Cys-165, Cys-52–Cys-68, Cys-102–Cys-256, Cys-144–Cys-212, Cys-176–Cys-191, and Cys-202–Cys-227. Catalysis depends on charge relay system residues His-67 and Asp-112. Asn-123 and Asn-172 each carry an N-linked (GlcNAc...) asparagine glycan. Ser-206 serves as the catalytic Charge relay system. N-linked (GlcNAc...) asparagine glycosylation is present at Asn-253.

Belongs to the peptidase S1 family. Snake venom subfamily. In terms of assembly, monomer. Expressed by the venom gland.

It is found in the secreted. It carries out the reaction Selective cleavage of Arg-|-Xaa bond in fibrinogen, to form fibrin, and release fibrinopeptide A. The specificity of further degradation of fibrinogen varies with species origin of the enzyme.. Thrombin-like snake venom serine protease. Cleaves fibrinogen (FGA) to split of fibrinopeptides AM, AO, and AY; the aberrant fibrinogen is then incapable of being cross-linked, forming easily dispersible clots. This chain is Thrombin-like enzyme ancrod-2, found in Calloselasma rhodostoma (Malayan pit viper).